The following is a 413-amino-acid chain: Dolichyl-diphosphooligosaccharide--protein glycosyltransferase 48 kDa subunit (413 aa).

Over 1-383 (GPRSLVLLEN…QYERFIPSAY (383 aa)) the chain is Lumenal. A helical transmembrane segment spans residues 384 to 404 (PYYAGAFSMMVGLFMFSIVFL). Topologically, residues 405 to 413 (HMKEKEKSD) are cytoplasmic.

The protein belongs to the DDOST 48 kDa subunit family. As to quaternary structure, component of the oligosaccharyltransferase (OST) complex.

Its subcellular location is the endoplasmic reticulum. The protein localises to the endoplasmic reticulum membrane. It participates in protein modification; protein glycosylation. Functionally, subunit of the oligosaccharyl transferase (OST) complex that catalyzes the initial transfer of a defined glycan (Glc(3)Man(9)GlcNAc(2) in eukaryotes) from the lipid carrier dolichol-pyrophosphate to an asparagine residue within an Asn-X-Ser/Thr consensus motif in nascent polypeptide chains, the first step in protein N-glycosylation. N-glycosylation occurs cotranslationally and the complex associates with the Sec61 complex at the channel-forming translocon complex that mediates protein translocation across the endoplasmic reticulum (ER). All subunits are required for a maximal enzyme activity. Required for the assembly of both SST3A- and SS3B-containing OST complexes. The sequence is that of Dolichyl-diphosphooligosaccharide--protein glycosyltransferase 48 kDa subunit from Gallus gallus (Chicken).